The sequence spans 90 residues: Bombyxin D-1 (90 aa).

Positions 1-18 (MKLLGFFLSWVSVCAIVS) are cleaved as a signal peptide. Disulfide bonds link cysteine 27–cysteine 77, cysteine 39–cysteine 90, and cysteine 76–cysteine 81. A propeptide spans 48–68 (SVAHYAGYGWPLLPSLSEERG) (c peptide like).

The protein belongs to the insulin family. In terms of assembly, heterodimer of a B chain and an A chain linked by two disulfide bonds.

The protein resides in the secreted. Brain peptide responsible for activation of prothoracic glands to produce ecdysone in insects. This is Bombyxin D-1 (BBXD1) from Bombyx mori (Silk moth).